The chain runs to 362 residues: Chorismate synthase (362 aa).

An NADP(+)-binding site is contributed by R46. FMN-binding positions include 122 to 124, 238 to 239, G278, 293 to 297, and R319; these read RSS, NA, and KPTPS.

This sequence belongs to the chorismate synthase family. As to quaternary structure, homotetramer. FMNH2 is required as a cofactor.

The catalysed reaction is 5-O-(1-carboxyvinyl)-3-phosphoshikimate = chorismate + phosphate. Its pathway is metabolic intermediate biosynthesis; chorismate biosynthesis; chorismate from D-erythrose 4-phosphate and phosphoenolpyruvate: step 7/7. Catalyzes the anti-1,4-elimination of the C-3 phosphate and the C-6 proR hydrogen from 5-enolpyruvylshikimate-3-phosphate (EPSP) to yield chorismate, which is the branch point compound that serves as the starting substrate for the three terminal pathways of aromatic amino acid biosynthesis. This reaction introduces a second double bond into the aromatic ring system. In Campylobacter jejuni subsp. jejuni serotype O:2 (strain ATCC 700819 / NCTC 11168), this protein is Chorismate synthase.